The sequence spans 202 residues: Diadenylate cyclase (202 aa).

A helical membrane pass occupies residues 6–26 (VFSVIILVLLFLILALTLLFV). In terms of domain architecture, DAC spans 29–185 (NKRTRSFVIR…RGVIKTLSSN (157 aa)).

Belongs to the adenylate cyclase family. DacB/CdaS subfamily. Probably oligomerizes.

The protein resides in the cell membrane. The enzyme catalyses 2 ATP = 3',3'-c-di-AMP + 2 diphosphate. Catalyzes the condensation of 2 ATP molecules into cyclic di-AMP (c-di-AMP), a second messenger used to regulate differing processes in different bacteria. This chain is Diadenylate cyclase, found in Mycoplasma pneumoniae (strain ATCC 29342 / M129 / Subtype 1) (Mycoplasmoides pneumoniae).